A 306-amino-acid polypeptide reads, in one-letter code: Choline-binding protein (306 aa).

An N-terminal signal peptide occupies residues 1 to 22 (MKRKYLKLMIGLALAATLTLSG). Cys23 carries N-palmitoyl cysteine lipidation. Cys23 is lipidated: S-diacylglycerol cysteine.

Belongs to the OsmX family.

Its subcellular location is the cell membrane. Member of a high affinity multicomponent binding-protein-dependent transport system for choline. This is Choline-binding protein (opuBC) from Bacillus subtilis (strain 168).